The primary structure comprises 126 residues: Glycine cleavage system H protein (126 aa).

In terms of domain architecture, Lipoyl-binding spans 21-103; it reads TVTIGISEHA…YEGGWIVKVK (83 aa). The residue at position 62 (K62) is an N6-lipoyllysine.

This sequence belongs to the GcvH family. The glycine cleavage system is composed of four proteins: P, T, L and H. (R)-lipoate serves as cofactor.

Its function is as follows. The glycine cleavage system catalyzes the degradation of glycine. The H protein shuttles the methylamine group of glycine from the P protein to the T protein. The protein is Glycine cleavage system H protein of Vibrio parahaemolyticus serotype O3:K6 (strain RIMD 2210633).